We begin with the raw amino-acid sequence, 107 residues long: U1-lycotoxin-Ls1v (107 aa).

An N-terminal signal peptide occupies residues 1-20 (MMKVLVVVALLVTLISYSSS). Residues 21–41 (EGIDDLEADELLSLTANEQTR) constitute a propeptide that is removed on maturation. 4 disulfides stabilise this stretch: Cys44–Cys59, Cys51–Cys68, Cys58–Cys86, and Cys70–Cys84.

The protein belongs to the neurotoxin 19 (CSTX) family. 04 (U1-Lctx) subfamily. As to expression, expressed by the venom gland.

The protein resides in the secreted. The sequence is that of U1-lycotoxin-Ls1v from Lycosa singoriensis (Wolf spider).